The primary structure comprises 512 residues: Cytochrome P450 monooxygenase 208 (512 aa).

Residues 4–24 (LFLVLDTGAAVLLVALLFVVY) form a helical membrane-spanning segment. Cys438 lines the heme pocket.

The protein belongs to the cytochrome P450 family. Heme is required as a cofactor.

The protein localises to the membrane. The protein operates within secondary metabolite biosynthesis. In terms of biological role, cytochrome P450 monooxygenase that is able to use 7-ethoxycoumarin as a substrate for oxidation. The sequence is that of Cytochrome P450 monooxygenase 208 from Postia placenta (strain ATCC 44394 / Madison 698-R) (Brown rot fungus).